The sequence spans 876 residues: Leucine--tRNA ligase (876 aa).

The 'HIGH' region signature appears at 42–52; the sequence is PYPSGKLHMGH. The short motif at 634-638 is the 'KMSKS' region element; the sequence is KMSKS. ATP is bound at residue lysine 637.

It belongs to the class-I aminoacyl-tRNA synthetase family.

The protein resides in the cytoplasm. It carries out the reaction tRNA(Leu) + L-leucine + ATP = L-leucyl-tRNA(Leu) + AMP + diphosphate. The protein is Leucine--tRNA ligase of Neisseria gonorrhoeae (strain NCCP11945).